A 1315-amino-acid polypeptide reads, in one-letter code: ESX secretion system protein EccC (1315 aa).

A compositionally biased stretch (basic residues) spans 1 to 11 (MSTVLVRRKER). The disordered stretch occupies residues 1–21 (MSTVLVRRKERRQPPQMPRGE). At 1–40 (MSTVLVRRKERRQPPQMPRGEILLESPPELPEVVTNSFQN) the chain is on the cytoplasmic side. A helical transmembrane segment spans residues 41 to 61 (VLMYLPMAAGSAAMVFTFLNH). The Extracellular segment spans residues 62–64 (RNT). Residues 65-85 (LQLVAGGMFALSMFGMMFGQL) form a helical membrane-spanning segment. The Cytoplasmic portion of the chain corresponds to 86–1315 (SQQSGERKTK…RLIQTAYRES (1230 aa)). 2 consecutive FtsK domains span residues 456-656 (GRPL…MESR) and 813-1004 (RDPY…YESE). 479-486 (GATGSGKS) contributes to the ATP binding site. Glutamate 593 is an active-site residue. The interval 721 to 1315 (RPQVVEQPQP…RLIQTAYRES (595 aa)) is binds EsxB. ATP-binding positions include 834 to 839 (QTGKST), threonine 1031, 1119 to 1124 (ECGKSN), glutamine 1293, and 1310 to 1311 (TA). One can recognise a FtsK 3 domain in the interval 1099–1282 (LSPVYLDFNT…MSGNKDEGIL (184 aa)).

As to quaternary structure, the cytosolic domain can form homodimers. Binds EsxB, which leads to multimerization, however EsxA disassembles the multimers, possibly by making EccC-EsxA-EsxB trimers instead of EccC-EsxB-EsxB-EccC tetramers. Forms a complex with EsxA and EsxB, probably wholly mediated by EsxB.

Its subcellular location is the cell membrane. With respect to regulation, esxB binding to the third FtsK domain causes multimerization; a subsequent unknown step relieves the allosteric inhibition of linker 2 on FtsK domain 1, activating the ATPase activity; a mutant EsxB ('Ala-98') does not cause multimers to form. In terms of biological role, part of the ESX specialized secretion system, which exports proteins from the cell including EsxA (ESAT-6) and EsxB (CFP-10). Has weak intrinsic ATPase activity; probably only the first FtsK domain can hydrolyze ATP. Might be the translocase subunit. The polypeptide is ESX secretion system protein EccC (Thermomonospora curvata (strain ATCC 19995 / DSM 43183 / JCM 3096 / KCTC 9072 / NBRC 15933 / NCIMB 10081 / Henssen B9)).